Consider the following 209-residue polypeptide: Large ribosomal subunit protein uL3 (209 aa).

Positions 133 to 153 (THGNSLSHRVPGSIGQNQTPG) are disordered. Q150 carries the post-translational modification N5-methylglutamine.

It belongs to the universal ribosomal protein uL3 family. As to quaternary structure, part of the 50S ribosomal subunit. Forms a cluster with proteins L14 and L19. In terms of processing, methylated by PrmB.

One of the primary rRNA binding proteins, it binds directly near the 3'-end of the 23S rRNA, where it nucleates assembly of the 50S subunit. The sequence is that of Large ribosomal subunit protein uL3 from Pectobacterium carotovorum subsp. carotovorum (strain PC1).